We begin with the raw amino-acid sequence, 60 residues long: Cytotoxin 2 (60 aa).

Disulfide bonds link C3–C21, C14–C38, C42–C53, and C54–C59.

This sequence belongs to the three-finger toxin family. Short-chain subfamily. Type IA cytotoxin sub-subfamily. In terms of assembly, monomer in solution; Homodimer and oligomer in the presence of negatively charged lipids forming a pore with a size ranging between 20 and 30 Angstroms. As to expression, expressed by the venom gland.

Its subcellular location is the secreted. It is found in the target cell membrane. In terms of biological role, shows cytolytic activity on many different cells by forming pore in lipid membranes. In vivo, increases heart rate or kills the animal by cardiac arrest. In addition, it binds to heparin with high affinity, interacts with Kv channel-interacting protein 1 (KCNIP1) in a calcium-independent manner, and binds to integrin alpha-V/beta-3 (ITGAV/ITGB3) with moderate affinity. The protein is Cytotoxin 2 of Naja mossambica (Mozambique spitting cobra).